Reading from the N-terminus, the 459-residue chain is ATP-dependent protease ATPase subunit HslU (459 aa).

ATP-binding positions include V18, G60 to E65, D272, E337, and R409.

The protein belongs to the ClpX chaperone family. HslU subfamily. As to quaternary structure, a double ring-shaped homohexamer of HslV is capped on each side by a ring-shaped HslU homohexamer. The assembly of the HslU/HslV complex is dependent on binding of ATP.

The protein localises to the cytoplasm. Its function is as follows. ATPase subunit of a proteasome-like degradation complex; this subunit has chaperone activity. The binding of ATP and its subsequent hydrolysis by HslU are essential for unfolding of protein substrates subsequently hydrolyzed by HslV. HslU recognizes the N-terminal part of its protein substrates and unfolds these before they are guided to HslV for hydrolysis. This chain is ATP-dependent protease ATPase subunit HslU, found in Thermoanaerobacter pseudethanolicus (strain ATCC 33223 / 39E) (Clostridium thermohydrosulfuricum).